The sequence spans 426 residues: Ornithine aminotransferase (426 aa).

Lys-291 carries the post-translational modification N6-(pyridoxal phosphate)lysine.

This sequence belongs to the class-III pyridoxal-phosphate-dependent aminotransferase family. Requires pyridoxal 5'-phosphate as cofactor.

It catalyses the reaction a 2-oxocarboxylate + L-ornithine = L-glutamate 5-semialdehyde + an L-alpha-amino acid. It functions in the pathway amino-acid biosynthesis; L-proline biosynthesis; L-glutamate 5-semialdehyde from L-ornithine: step 1/1. The protein is Ornithine aminotransferase of Vigna aconitifolia (Moth bean).